The following is an 821-amino-acid chain: DNA ligase (821 aa).

NAD(+) is bound by residues 33 to 37 (DVDYD), 82 to 83 (SL), and Glu-113. Lys-115 serves as the catalytic N6-AMP-lysine intermediate. The NAD(+) site is built by Arg-136, Glu-173, Lys-290, and Lys-314. 4 residues coordinate Zn(2+): Cys-408, Cys-411, Cys-426, and Cys-432. In terms of domain architecture, BRCT spans 741–821 (IVAGPLDGQT…RLLAYLAEHE (81 aa)).

It belongs to the NAD-dependent DNA ligase family. LigA subfamily. Requires Mg(2+) as cofactor. It depends on Mn(2+) as a cofactor.

It catalyses the reaction NAD(+) + (deoxyribonucleotide)n-3'-hydroxyl + 5'-phospho-(deoxyribonucleotide)m = (deoxyribonucleotide)n+m + AMP + beta-nicotinamide D-nucleotide.. In terms of biological role, DNA ligase that catalyzes the formation of phosphodiester linkages between 5'-phosphoryl and 3'-hydroxyl groups in double-stranded DNA using NAD as a coenzyme and as the energy source for the reaction. It is essential for DNA replication and repair of damaged DNA. The sequence is that of DNA ligase from Stenotrophomonas maltophilia (strain R551-3).